The sequence spans 268 residues: tRNA pseudouridine synthase A (268 aa).

Residue D52 is the Nucleophile of the active site. Y113 serves as a coordination point for substrate.

It belongs to the tRNA pseudouridine synthase TruA family. In terms of assembly, homodimer.

The catalysed reaction is uridine(38/39/40) in tRNA = pseudouridine(38/39/40) in tRNA. Its function is as follows. Formation of pseudouridine at positions 38, 39 and 40 in the anticodon stem and loop of transfer RNAs. The chain is tRNA pseudouridine synthase A from Rhizobium leguminosarum bv. trifolii (strain WSM2304).